The following is a 94-amino-acid chain: Beta-defensin 132 (94 aa).

The signal sequence occupies residues 1-22 (MKFLLLVLAALGFLTQVIPASA). Intrachain disulfides connect cysteine 27-cysteine 55 and cysteine 39-cysteine 56. Residues 72–94 (GNHWQSRRNTQRKDKKQQTTVTS) form a disordered region. Basic residues predominate over residues 76-86 (QSRRNTQRKDK).

Belongs to the beta-defensin family.

It localises to the secreted. Its function is as follows. Has antibacterial activity. This is Beta-defensin 132 (DEFB132) from Gorilla gorilla gorilla (Western lowland gorilla).